We begin with the raw amino-acid sequence, 208 residues long: Pyridoxine/pyridoxamine 5'-phosphate oxidase (208 aa).

Residues 53–58, 68–69, Lys75, and Gln100 contribute to the FMN site; these read RTVLLK and YS. Lys58 serves as a coordination point for substrate. Positions 118, 122, and 126 each coordinate substrate. Residues 135–136 and Trp180 contribute to the FMN site; that span reads QS. Substrate is bound at residue 186–188; it reads RLH. Arg190 is an FMN binding site.

The protein belongs to the pyridoxamine 5'-phosphate oxidase family. In terms of assembly, homodimer. The cofactor is FMN.

The enzyme catalyses pyridoxamine 5'-phosphate + O2 + H2O = pyridoxal 5'-phosphate + H2O2 + NH4(+). The catalysed reaction is pyridoxine 5'-phosphate + O2 = pyridoxal 5'-phosphate + H2O2. It participates in cofactor metabolism; pyridoxal 5'-phosphate salvage; pyridoxal 5'-phosphate from pyridoxamine 5'-phosphate: step 1/1. Its pathway is cofactor metabolism; pyridoxal 5'-phosphate salvage; pyridoxal 5'-phosphate from pyridoxine 5'-phosphate: step 1/1. In terms of biological role, catalyzes the oxidation of either pyridoxine 5'-phosphate (PNP) or pyridoxamine 5'-phosphate (PMP) into pyridoxal 5'-phosphate (PLP). In Xylella fastidiosa (strain Temecula1 / ATCC 700964), this protein is Pyridoxine/pyridoxamine 5'-phosphate oxidase.